A 320-amino-acid chain; its full sequence is NAD kinase (320 aa).

Aspartate 96 serves as the catalytic Proton acceptor. NAD(+) is bound by residues 96 to 97 (DG), arginine 101, 170 to 171 (NE), aspartate 200, and 211 to 216 (TAYAFS).

This sequence belongs to the NAD kinase family. Requires a divalent metal cation as cofactor.

The protein localises to the cytoplasm. The catalysed reaction is NAD(+) + ATP = ADP + NADP(+) + H(+). Functionally, involved in the regulation of the intracellular balance of NAD and NADP, and is a key enzyme in the biosynthesis of NADP. Catalyzes specifically the phosphorylation on 2'-hydroxyl of the adenosine moiety of NAD to yield NADP. The sequence is that of NAD kinase from Rhodococcus opacus (strain B4).